Here is a 200-residue protein sequence, read N- to C-terminus: Phospholipase A2 inhibitor 1 (200 aa).

Positions 1–19 (MKSLHIICLLFIFVARGNS) are cleaved as a signal peptide. 8 disulfide bridges follow: C22–C46, C25–C32, C39–C67, C73–C94, C95–C100, C118–C143, C136–C165, and C169–C191. The N-linked (GlcNAc...) asparagine glycan is linked to N176.

It belongs to the CNF-like-inhibitor family. Occurs as a mixture of oligomers. Tetrameric arrangement appears to be the predominant quaternary structure. N-glycosylated. Expressed by the liver.

It localises to the secreted. In terms of biological role, inhibits basic phospholipase A2 isozymes PLA-B, BP-I and BP-II. The chain is Phospholipase A2 inhibitor 1 from Protobothrops flavoviridis (Habu).